Consider the following 377-residue polypeptide: Beta sliding clamp (377 aa).

The protein belongs to the beta sliding clamp family. As to quaternary structure, forms a ring-shaped head-to-tail homodimer around DNA which binds and tethers DNA polymerases and other proteins to the DNA. The DNA replisome complex has a single clamp-loading complex (3 tau and 1 each of delta, delta', psi and chi subunits) which binds 3 Pol III cores (1 core on the leading strand and 2 on the lagging strand) each with a beta sliding clamp dimer. Additional proteins in the replisome are other copies of gamma, psi and chi, Ssb, DNA helicase and RNA primase.

It is found in the cytoplasm. Its function is as follows. Confers DNA tethering and processivity to DNA polymerases and other proteins. Acts as a clamp, forming a ring around DNA (a reaction catalyzed by the clamp-loading complex) which diffuses in an ATP-independent manner freely and bidirectionally along dsDNA. Initially characterized for its ability to contact the catalytic subunit of DNA polymerase III (Pol III), a complex, multichain enzyme responsible for most of the replicative synthesis in bacteria; Pol III exhibits 3'-5' exonuclease proofreading activity. The beta chain is required for initiation of replication as well as for processivity of DNA replication. This Staphylococcus epidermidis (strain ATCC 35984 / DSM 28319 / BCRC 17069 / CCUG 31568 / BM 3577 / RP62A) protein is Beta sliding clamp (dnaN).